A 559-amino-acid polypeptide reads, in one-letter code: Extracellular matrix protein 1 (559 aa).

Residues methionine 1 to alanine 19 form the signal peptide. Repeat copies occupy residues histidine 170–tyrosine 298 and proline 302–tyrosine 424. Residues histidine 170 to tyrosine 424 form a 2 X approximate repeats region. N-linked (GlcNAc...) asparagine glycosylation is present at asparagine 373. Residues asparagine 463 and asparagine 535 are each glycosylated (N-linked (GlcNAc...) (high mannose) asparagine). The tract at residues asparagine 535–glutamate 559 is disordered. Serine 556 is subject to Phosphoserine.

As to quaternary structure, interacts (via C-terminus) with HSPG2 (via C-terminus). Interacts with EFEMP1/FBLN3 and LAMB3. Interacts with MMP9. Expressed in the surrounding connective tissues of developing long bones, but not in the cartilage. The long isoform is expressed in a number of tissues including liver, heart and lungs. The short isoform is expressed in skin and cartilage-containing tissues such as tail and front paw. No expression is found in brain.

The protein localises to the secreted. Its subcellular location is the extracellular space. It is found in the extracellular matrix. In terms of biological role, involved in endochondral bone formation as negative regulator of bone mineralization. Stimulates the proliferation of endothelial cells and promotes angiogenesis. Inhibits MMP9 proteolytic activity. In Mus musculus (Mouse), this protein is Extracellular matrix protein 1 (Ecm1).